Consider the following 336-residue polypeptide: MEKYSFESVQELSLRPNVWEEYIGQEKIKKNLKVFIEASKKRKECLDHILFFGPPGLGKTTLSHIIAHEMGCNIKVSAAPMIEKSGDLAAILTNLNEGDILFIDEIHRLSPAIEEILYPAMEDFRLDIIIGSGPAAQTLKIDLAPFTLIGATTRAGMLSNPLRDRFGMSFRLQFYEPKELSAIVICASSKLGRSLSKSGADEIARRSRGTPRIALRLLRRVRDFADVGEYAQDMRNQSEISLECVRYALNELGVNELGFDELDLRYLAILAESRGKAIGLNTIAAAMSEDEATIEDVIEPYLLANGYLERTAKGRVASPKTYELLHIPFLEQKGLF.

The interval 1-175 (MEKYSFESVQ…FGMSFRLQFY (175 aa)) is large ATPase domain (RuvB-L). ATP-binding positions include leucine 14, arginine 15, glycine 56, lysine 59, threonine 60, threonine 61, 122–124 (EDF), arginine 165, tyrosine 175, and arginine 212. Threonine 60 is a Mg(2+) binding site. The interval 176 to 253 (EPKELSAIVI…CVRYALNELG (78 aa)) is small ATPAse domain (RuvB-S). The segment at 256 to 336 (ELGFDELDLR…IPFLEQKGLF (81 aa)) is head domain (RuvB-H). Residues arginine 310 and arginine 315 each coordinate DNA.

Belongs to the RuvB family. Homohexamer. Forms an RuvA(8)-RuvB(12)-Holliday junction (HJ) complex. HJ DNA is sandwiched between 2 RuvA tetramers; dsDNA enters through RuvA and exits via RuvB. An RuvB hexamer assembles on each DNA strand where it exits the tetramer. Each RuvB hexamer is contacted by two RuvA subunits (via domain III) on 2 adjacent RuvB subunits; this complex drives branch migration. In the full resolvosome a probable DNA-RuvA(4)-RuvB(12)-RuvC(2) complex forms which resolves the HJ.

It is found in the cytoplasm. It carries out the reaction ATP + H2O = ADP + phosphate + H(+). Functionally, the RuvA-RuvB-RuvC complex processes Holliday junction (HJ) DNA during genetic recombination and DNA repair, while the RuvA-RuvB complex plays an important role in the rescue of blocked DNA replication forks via replication fork reversal (RFR). RuvA specifically binds to HJ cruciform DNA, conferring on it an open structure. The RuvB hexamer acts as an ATP-dependent pump, pulling dsDNA into and through the RuvAB complex. RuvB forms 2 homohexamers on either side of HJ DNA bound by 1 or 2 RuvA tetramers; 4 subunits per hexamer contact DNA at a time. Coordinated motions by a converter formed by DNA-disengaged RuvB subunits stimulates ATP hydrolysis and nucleotide exchange. Immobilization of the converter enables RuvB to convert the ATP-contained energy into a lever motion, pulling 2 nucleotides of DNA out of the RuvA tetramer per ATP hydrolyzed, thus driving DNA branch migration. The RuvB motors rotate together with the DNA substrate, which together with the progressing nucleotide cycle form the mechanistic basis for DNA recombination by continuous HJ branch migration. Branch migration allows RuvC to scan DNA until it finds its consensus sequence, where it cleaves and resolves cruciform DNA. This Helicobacter hepaticus (strain ATCC 51449 / 3B1) protein is Holliday junction branch migration complex subunit RuvB.